We begin with the raw amino-acid sequence, 395 residues long: MATINIRRDVKDSFYRYRMPKLQSKIEGKGNGIKTVIPNMSDIAKALGRPPLYVTKFFGFELGAQTTIIADMDRYIVNGAHDAGKLQDLLDVFIRRFVLCASCQNPETELSINKKDQTISYDCKACGYRGVIDGRHKLTGVIVKNPPAKKKSHKHKRDSPVAEEEDGAEDELTRRIRQEAAELPTAEVVNDEDWAVDTSEEAVRARVQELEGNMKDSLTLSDLRGDEEEAESSRYDQFGEWLEDNYPGVSDVEIYKKMKEENIHHKSKAIVVLVQCIITSPYVGEFEKHGALFKKLCTTDKHERALLGGFERLMENTELVHIDVVPKVLLEIYQNDLVSDDMFEKWGAKASKKYVSRETSKKIHEAAEPFLTWLAEASDESESEDEEEEEEDDDE.

GTP is bound at residue 28-35; sequence GKGNGIKT. Disordered regions lie at residues 146 to 171 and 374 to 395; these read PPAK…AEDE and LAEA…DDDE. The span at 147-157 shows a compositional bias: basic residues; the sequence is PAKKKSHKHKR. Acidic residues-rich tracts occupy residues 161-170 and 377-395; these read VAEEEDGAED and ASDE…DDDE. A W2 domain is found at 228-384; the sequence is EEAESSRYDQ…AEASDESESE (157 aa).

This sequence belongs to the eIF-2-beta/eIF-5 family. Monomer.

Functionally, catalyzes the hydrolysis of GTP bound to the 40S ribosomal initiation complex (40S.mRNA.Met-tRNA[F].eIF-2.GTP) with the subsequent joining of a 60S ribosomal subunit resulting in the release of eIF-2 and the guanine nucleotide. The subsequent joining of a 60S ribosomal subunit results in the formation of a functional 80S initiation complex (80S.mRNA.Met-tRNA[F]). This chain is Probable eukaryotic translation initiation factor 5 (tif5), found in Schizosaccharomyces pombe (strain 972 / ATCC 24843) (Fission yeast).